A 591-amino-acid chain; its full sequence is Protein enabled homolog (591 aa).

Residues 1–111 (MSEQSICQAR…SAMMHALEVL (111 aa)) form the WH1 domain. Polar residues predominate over residues 115–136 (ETGPTLPRQNSQLPAQVQNGPS). Residues 115-146 (ETGPTLPRQNSQLPAQVQNGPSQEELEIQRRQ) are disordered. Ser125 bears the Phosphoserine mark. Residues 135-265 (PSQEELEIQR…LEWERERRIS (131 aa)) are a coiled coil. Repeat copies occupy residues 156-160 (LERER), 161-165 (LERER), 166-170 (MERER), 171-175 (LERER), 176-180 (LERER), 181-185 (LERER), 186-190 (LEQEQ), 191-195 (LERER), and 196-200 (QERER). Residues 156–200 (LERERLERERMERERLERERLERERLERERLEQEQLERERQERER) are 9 X 5 AA tandem repeats of [LMQ]-E-[QR]-E-[QR]. Basic and acidic residues predominate over residues 221–264 (RLDRERQERQERERLERLERERQERERQEQLEREQLEWERERRI). The tract at residues 221–379 (RLDRERQERQ…PPLPASGFFL (159 aa)) is disordered. The residue at position 265 (Ser265) is a Phosphoserine; by PKA. Residues 275–305 (TPLNSVLGDSSASEPGLQAASQPAETPSQQG) are compositionally biased toward polar residues. Pro residues-rich tracts occupy residues 311–323 (LAPP…PPGP) and 330–373 (LPPP…PPLP). Residues 391 to 411 (GLAAAIAGAKLRKVSRMEDTS) are EVH2 block A. An EVH2 region spans residues 391 to 588 (GLAAAIAGAK…DAIRQELSKS (198 aa)). The KLKR motif lies at 400–403 (KLRK). The disordered stretch occupies residues 405–549 (SRMEDTSFPS…LSQPSANGVQ (145 aa)). A compositionally biased stretch (gly residues) spans 432-443 (RGNGPLPLGGSG). Positions 442-459 (SGLMEEMSALLARRRRIA) are EVH2 block B. Residue Ile465 is modified to Phosphothreonine. Phosphoserine is present on residues Glu471 and Glu475. Composition is skewed to polar residues over residues 479–491 (PVTS…STPE) and 499–509 (RTNTMNGSKSP). Thr502 is subject to Phosphothreonine. Ser506, Ser508, and Ser512 each carry phosphoserine. Residues 538 to 549 (TPLSQPSANGVQ) are compositionally biased toward polar residues. Positions 554–588 (DYDRLKQDILDEMRKELTKLKEELIDAIRQELSKS) are EVH2 block C. A coiled-coil region spans residues 557-587 (RLKQDILDEMRKELTKLKEELIDAIRQELSK).

This sequence belongs to the Ena/VASP family. In terms of assembly, homotetramer. Interacts with APBB1IP, APBB1, PFN1 and ROBO4. Isoforms, containing the polyproline-rich regions with PPLP motifs, bind the WW domain of APBB1IP. Isoforms, containing the PPSY motif, bind, in vitro, to the WW2 and WW3 domains of NEDD4 and to the WW1 domain of YAP1. Binds the SH3 domain of BAIAP2-alpha but only after the autoinhibitory region of BAIAP2-alpha has been blocked by interaction with CDC42. Interacts, via the EVH1/WH1 domain, with the Pro-rich domains from VCL, ZYX and Listeria monocytogenes actA and with TES (via LIM domains). The TES LIM domain and the Pro-rich domains from VCL or ZYX compete for the same binding site. Interaction with ZYX is important for targeting ENAH to focal adhesions and enhances production of actin-rich structures at the apical surface of cells. Interacts, through the Pro-rich region, with the C-terminal SH3 domain of DNMPB. Binds GPHN. Interacts with FAT1 (via EVH1 domains). Heterotrimer with TES and ACTL7A. Interacts with PRPF40A. In terms of processing, NTN1-induced PKA phosphorylation on Ser-265 directly parallels the formation of filopodial protrusions. As to expression, expressed in myoepithelia of parotid, breast, bronchial glands and sweat glands. Expressed in colon-rectum muscolaris mucosae epithelium, pancreas acinar ductal epithelium, endometrium epithelium, prostate fibromuscolar stroma and placenta vascular media. Overexpressed in a majority of breast cancer cell lines and primary breast tumor lesions.

The protein localises to the cytoplasm. Its subcellular location is the cytoskeleton. It localises to the cell projection. The protein resides in the lamellipodium. It is found in the filopodium. The protein localises to the synapse. Its subcellular location is the cell junction. It localises to the focal adhesion. In terms of biological role, ena/VASP proteins are actin-associated proteins involved in a range of processes dependent on cytoskeleton remodeling and cell polarity such as axon guidance and lamellipodial and filopodial dynamics in migrating cells. ENAH induces the formation of F-actin rich outgrowths in fibroblasts. Acts synergistically with BAIAP2-alpha and downstream of NTN1 to promote filipodia formation. This chain is Protein enabled homolog (ENAH), found in Homo sapiens (Human).